The sequence spans 1216 residues: DNA-directed RNA polymerase subunit beta' (1216 aa).

Zn(2+)-binding residues include Cys60, Cys62, Cys75, and Cys78. 3 residues coordinate Mg(2+): Asp450, Asp452, and Asp454. 4 residues coordinate Zn(2+): Cys819, Cys893, Cys900, and Cys903.

The protein belongs to the RNA polymerase beta' chain family. In terms of assembly, the RNAP catalytic core consists of 2 alpha, 1 beta, 1 beta' and 1 omega subunit. When a sigma factor is associated with the core the holoenzyme is formed, which can initiate transcription. Mg(2+) is required as a cofactor. It depends on Zn(2+) as a cofactor.

The enzyme catalyses RNA(n) + a ribonucleoside 5'-triphosphate = RNA(n+1) + diphosphate. In terms of biological role, DNA-dependent RNA polymerase catalyzes the transcription of DNA into RNA using the four ribonucleoside triphosphates as substrates. This chain is DNA-directed RNA polymerase subunit beta', found in Streptococcus agalactiae serotype Ia (strain ATCC 27591 / A909 / CDC SS700).